The chain runs to 300 residues: Protein CANDIDATE G-PROTEIN COUPLED RECEPTOR 2 (300 aa).

Helical transmembrane passes span 37 to 57, 73 to 93, 110 to 130, 152 to 172, 183 to 203, 222 to 242, and 245 to 265; these read GFLHNTVLVLASILFVAYLAY, IMIAYYGFLWLVSLLNLAWCC, LTLFTTSGMLFLEVSLVAFLF, IGLDLLLKAIYLFGFGVPLFI, WGLWVIHKLLLAGIYGMIFFM, ITVMLALNGLSLFACALTANG, and FGLWLYGITSVCYHAFYLPLL.

This sequence belongs to the UPF0359 family. As to quaternary structure, interacts with GPA1. As to expression, expressed at low levels in seedlings.

It is found in the cell membrane. Its function is as follows. Plays a role in plants and microbes interactions. G-protein coupled melatonin receptor involved in root growth mediated by the bacterial quorum-sensing signals N-acyl-homoserine lactones (AHLs). Binds to melatonin. Phytomelatonin receptor required, in collaboration with GPA1, for melatonin-mediated stomatal closure involving H(2)O(2) and Ca(2+) signals. Essential for melatonin-mediated plant response to osmotic stress probably by activating reactive oxygen species (ROS) scavenging ability. This is Protein CANDIDATE G-PROTEIN COUPLED RECEPTOR 2 from Arabidopsis thaliana (Mouse-ear cress).